Here is a 286-residue protein sequence, read N- to C-terminus: 4-hydroxybenzoate octaprenyltransferase (286 aa).

Helical transmembrane passes span 20 to 40, 43 to 63, 83 to 103, 135 to 155, 160 to 180, 209 to 229, and 234 to 254; these read IGIL…ADGM, PMIL…GCAI, LATG…LSLC, FFAM…PMAF, GTVP…VIAY, VAGI…AGIL, and IWFY…YTMI.

Belongs to the UbiA prenyltransferase family. Requires Mg(2+) as cofactor.

Its subcellular location is the cell inner membrane. The catalysed reaction is all-trans-octaprenyl diphosphate + 4-hydroxybenzoate = 4-hydroxy-3-(all-trans-octaprenyl)benzoate + diphosphate. It functions in the pathway cofactor biosynthesis; ubiquinone biosynthesis. Catalyzes the prenylation of para-hydroxybenzoate (PHB) with an all-trans polyprenyl group. Mediates the second step in the final reaction sequence of ubiquinone-8 (UQ-8) biosynthesis, which is the condensation of the polyisoprenoid side chain with PHB, generating the first membrane-bound Q intermediate 3-octaprenyl-4-hydroxybenzoate. This is 4-hydroxybenzoate octaprenyltransferase from Nitrosomonas eutropha (strain DSM 101675 / C91 / Nm57).